A 74-amino-acid polypeptide reads, in one-letter code: ATP synthase subunit c (74 aa).

The next 2 membrane-spanning stretches (helical) occupy residues 5-25 (LAHIGAGLAAIGSGAAAIGVG) and 49-69 (LFIGIAFAEALGIFAFLVALL).

The protein belongs to the ATPase C chain family. In terms of assembly, F-type ATPases have 2 components, F(1) - the catalytic core - and F(0) - the membrane proton channel. F(1) has five subunits: alpha(3), beta(3), gamma(1), delta(1), epsilon(1). F(0) has four main subunits: a(1), b(1), b'(1) and c(10-14). The alpha and beta chains form an alternating ring which encloses part of the gamma chain. F(1) is attached to F(0) by a central stalk formed by the gamma and epsilon chains, while a peripheral stalk is formed by the delta, b and b' chains.

The protein localises to the cell inner membrane. In terms of biological role, f(1)F(0) ATP synthase produces ATP from ADP in the presence of a proton or sodium gradient. F-type ATPases consist of two structural domains, F(1) containing the extramembraneous catalytic core and F(0) containing the membrane proton channel, linked together by a central stalk and a peripheral stalk. During catalysis, ATP synthesis in the catalytic domain of F(1) is coupled via a rotary mechanism of the central stalk subunits to proton translocation. Its function is as follows. Key component of the F(0) channel; it plays a direct role in translocation across the membrane. A homomeric c-ring of between 10-14 subunits forms the central stalk rotor element with the F(1) delta and epsilon subunits. This chain is ATP synthase subunit c, found in Roseobacter denitrificans (strain ATCC 33942 / OCh 114) (Erythrobacter sp. (strain OCh 114)).